A 240-amino-acid polypeptide reads, in one-letter code: Uridylate kinase (240 aa).

14 to 17 lines the ATP pocket; the sequence is KLSG. A UMP-binding site is contributed by Gly56. ATP is bound by residues Gly57 and Arg61. Residues Asp76 and 137 to 144 contribute to the UMP site; that span reads TGNPFFTT. Positions 164, 170, and 173 each coordinate ATP.

This sequence belongs to the UMP kinase family. Homohexamer.

The protein resides in the cytoplasm. The enzyme catalyses UMP + ATP = UDP + ADP. The protein operates within pyrimidine metabolism; CTP biosynthesis via de novo pathway; UDP from UMP (UMPK route): step 1/1. Its activity is regulated as follows. Inhibited by UTP. In terms of biological role, catalyzes the reversible phosphorylation of UMP to UDP. In Acidovorax sp. (strain JS42), this protein is Uridylate kinase.